Reading from the N-terminus, the 380-residue chain is Glutamate 5-kinase (380 aa).

ATP is bound at residue K20. Substrate contacts are provided by S59, D146, and N158. Residue 220-226 (TGGMYSK) coordinates ATP. Residues 285 to 363 (SGTVTVDEGA…HEVAAILGDA (79 aa)) enclose the PUA domain.

Belongs to the glutamate 5-kinase family.

Its subcellular location is the cytoplasm. The enzyme catalyses L-glutamate + ATP = L-glutamyl 5-phosphate + ADP. It participates in amino-acid biosynthesis; L-proline biosynthesis; L-glutamate 5-semialdehyde from L-glutamate: step 1/2. In terms of biological role, catalyzes the transfer of a phosphate group to glutamate to form L-glutamate 5-phosphate. The chain is Glutamate 5-kinase from Nitratidesulfovibrio vulgaris (strain ATCC 29579 / DSM 644 / CCUG 34227 / NCIMB 8303 / VKM B-1760 / Hildenborough) (Desulfovibrio vulgaris).